The primary structure comprises 277 residues: 2-dehydro-3-deoxyphosphooctonate aldolase (277 aa).

This sequence belongs to the KdsA family.

Its subcellular location is the cytoplasm. The enzyme catalyses D-arabinose 5-phosphate + phosphoenolpyruvate + H2O = 3-deoxy-alpha-D-manno-2-octulosonate-8-phosphate + phosphate. The protein operates within carbohydrate biosynthesis; 3-deoxy-D-manno-octulosonate biosynthesis; 3-deoxy-D-manno-octulosonate from D-ribulose 5-phosphate: step 2/3. It functions in the pathway bacterial outer membrane biogenesis; lipopolysaccharide biosynthesis. The polypeptide is 2-dehydro-3-deoxyphosphooctonate aldolase (Syntrophotalea carbinolica (strain DSM 2380 / NBRC 103641 / GraBd1) (Pelobacter carbinolicus)).